A 197-amino-acid polypeptide reads, in one-letter code: ATP-dependent Clp protease proteolytic subunit (197 aa).

The active-site Nucleophile is the Ser97. His122 is a catalytic residue.

It belongs to the peptidase S14 family. Fourteen ClpP subunits assemble into 2 heptameric rings which stack back to back to give a disk-like structure with a central cavity, resembling the structure of eukaryotic proteasomes.

It is found in the cytoplasm. The enzyme catalyses Hydrolysis of proteins to small peptides in the presence of ATP and magnesium. alpha-casein is the usual test substrate. In the absence of ATP, only oligopeptides shorter than five residues are hydrolyzed (such as succinyl-Leu-Tyr-|-NHMec, and Leu-Tyr-Leu-|-Tyr-Trp, in which cleavage of the -Tyr-|-Leu- and -Tyr-|-Trp bonds also occurs).. Functionally, cleaves peptides in various proteins in a process that requires ATP hydrolysis. Has a chymotrypsin-like activity. Plays a major role in the degradation of misfolded proteins. This Trichlorobacter lovleyi (strain ATCC BAA-1151 / DSM 17278 / SZ) (Geobacter lovleyi) protein is ATP-dependent Clp protease proteolytic subunit.